The sequence spans 413 residues: 4-hydroxy-3-methylbut-2-en-1-yl diphosphate synthase (flavodoxin) (413 aa).

[4Fe-4S] cluster-binding residues include Cys-298, Cys-301, Cys-344, and Glu-351.

It belongs to the IspG family. The cofactor is [4Fe-4S] cluster.

It carries out the reaction (2E)-4-hydroxy-3-methylbut-2-enyl diphosphate + oxidized [flavodoxin] + H2O + 2 H(+) = 2-C-methyl-D-erythritol 2,4-cyclic diphosphate + reduced [flavodoxin]. It participates in isoprenoid biosynthesis; isopentenyl diphosphate biosynthesis via DXP pathway; isopentenyl diphosphate from 1-deoxy-D-xylulose 5-phosphate: step 5/6. Its function is as follows. Converts 2C-methyl-D-erythritol 2,4-cyclodiphosphate (ME-2,4cPP) into 1-hydroxy-2-methyl-2-(E)-butenyl 4-diphosphate. This is 4-hydroxy-3-methylbut-2-en-1-yl diphosphate synthase (flavodoxin) from Koribacter versatilis (strain Ellin345).